Consider the following 307-residue polypeptide: Acyl transferase (307 aa).

Active-site charge relay system residues include Ser-116, Asp-213, and His-243.

Belongs to the LuxD family.

The protein operates within lipid metabolism; fatty acid reduction for biolumincescence. In terms of biological role, acyl transferase is part of the fatty acid reductase system required for aldehyde biosynthesis; it produces fatty acids for the luminescent reaction. In Aliivibrio fischeri (strain ATCC 700601 / ES114) (Vibrio fischeri), this protein is Acyl transferase.